We begin with the raw amino-acid sequence, 513 residues long: Calcium-binding mitochondrial carrier protein SCaMC-2 (513 aa).

At 1-233 (MARPRSLVSP…EKQTGMWWRH (233 aa)) the chain is on the mitochondrial intermembrane side. 4 consecutive EF-hand domains span residues 55–90 (EHET…LGVH), 91–124 (RTEL…RDHE), 122–157 (DHEK…LGVN), and 158–193 (ISEQ…HPAE). Ca(2+) is bound by residues Asp68, Asn70, Asp72, Asp79, Asp104, Asp106, Asp108, Gln110, and Glu115. 3 Solcar repeats span residues 228–314 (GMWW…MKRI), 322–407 (LGIH…LKNA), and 419–507 (PGVF…LKLT). A helical transmembrane segment spans residues 234-251 (LVAGGGAGAVSRTCTAPL). The Mitochondrial matrix portion of the chain corresponds to 252-288 (DRLKVLMQVHASRSNNMSMLGGFTQMIREGGIRSLWR). The chain crosses the membrane as a helical span at residues 289 to 308 (GNGINVIKIAPESAIKFMAY). At 309–331 (EQMKRIIGSDQETLGIHERLVAG) the chain is on the mitochondrial intermembrane side. The chain crosses the membrane as a helical span at residues 332–345 (SLAGVIAQSSIYPM). Over 346-381 (EVLKTRMALRKTGQYQGMLDCGKKILLKEGVSAFYK) the chain is Mitochondrial matrix. The chain crosses the membrane as a helical span at residues 382 to 401 (GYVPNMLGIIPYAGIDLAVY). At 402 to 424 (ETLKNAWLQRYATSSADPGVFVL) the chain is on the mitochondrial intermembrane side. Residues 425–442 (LACGTISSTCGQLASYPL) form a helical membrane-spanning segment. Residues 443–481 (ALVRTRMQAEASVEGAPQMTMSKLFKHIVKTEGAFGLYR) are Mitochondrial matrix-facing. A helical transmembrane segment spans residues 482-501 (GLAPNFMKVIPAVSISYVVY). Topologically, residues 502-513 (ENLKLTLGVQSR) are mitochondrial intermembrane.

It belongs to the mitochondrial carrier (TC 2.A.29) family.

It is found in the mitochondrion inner membrane. Calcium-dependent mitochondrial solute carrier. This Xenopus tropicalis (Western clawed frog) protein is Calcium-binding mitochondrial carrier protein SCaMC-2 (slc25a25).